We begin with the raw amino-acid sequence, 388 residues long: Na(+)/H(+) antiporter NhaA (388 aa).

Residues 1–11 (MKHLHRFFSSD) are Cytoplasmic-facing. A helical transmembrane segment spans residues 12 to 31 (ASGGIILIIAAILAMIMANS). Topologically, residues 32–58 (GATSGWYHDFLETPVQLRVGSLEINKN) are periplasmic. A helical transmembrane segment spans residues 59–80 (MLLWINDALMAVFFLLVGLEVK). At 81–96 (RELMQGSLASLRQAAF) the chain is on the cytoplasmic side. The chain crosses the membrane as a helical span at residues 97 to 116 (PVIAAIGGMIVPALLYLAFN). Over 117–122 (YADPIT) the chain is Periplasmic. A helical transmembrane segment spans residues 123-130 (REGWAIPA). Residues 131–154 (ATDIAFALGVLALLGSRVPLVLKI) lie on the Cytoplasmic side of the membrane. A helical transmembrane segment spans residues 155 to 176 (FLMALAIIDDLGAIIIIALFYT). Over 177–180 (NDLS) the chain is Periplasmic. The helical transmembrane segment at 181–200 (MASLGVAAVAIAVLAVLNLC) threads the bilayer. Residues 201-204 (GVRR) lie on the Cytoplasmic side of the membrane. A helical transmembrane segment spans residues 205–222 (TGVYILVGVVLWTAVLKS). Position 223 (Gly-223) is a topological domain, periplasmic. Residues 224–236 (VHATLAGVIVGFF) form a helical membrane-spanning segment. Residues 237–253 (IPLKEKHGRSPAKRLEH) lie on the Cytoplasmic side of the membrane. A helical membrane pass occupies residues 254 to 272 (VLHPWVAYLILPLFAFANA). At 273–286 (GVSLQGVTLDGLTS) the chain is on the periplasmic side. A helical transmembrane segment spans residues 287–310 (ILPLGIIAGLLIGKPLGISLFCWL). Topologically, residues 311-339 (ALRLKLAHLPEGTTYQQIMVVGILCGIGF) are cytoplasmic. A helical transmembrane segment spans residues 340–350 (TMSIFIASLAF). Residues 351 to 357 (GSVDPEL) are Periplasmic-facing. Residues 358–380 (INWAKLGILVGSISSAVIGYSWL) form a helical membrane-spanning segment. Residues 381-388 (RVRLRPSV) lie on the Cytoplasmic side of the membrane.

The protein belongs to the NhaA Na(+)/H(+) (TC 2.A.33) antiporter family.

The protein resides in the cell inner membrane. The catalysed reaction is Na(+)(in) + 2 H(+)(out) = Na(+)(out) + 2 H(+)(in). Its function is as follows. Na(+)/H(+) antiporter that extrudes sodium in exchange for external protons. In Shigella flexneri, this protein is Na(+)/H(+) antiporter NhaA.